The chain runs to 335 residues: Nucleoid-associated protein YejK (335 aa).

This sequence belongs to the YejK family.

The protein localises to the cytoplasm. It is found in the nucleoid. This is Nucleoid-associated protein YejK from Salmonella arizonae (strain ATCC BAA-731 / CDC346-86 / RSK2980).